The primary structure comprises 340 residues: L-threonine 3-dehydrogenase (340 aa).

A Zn(2+)-binding site is contributed by cysteine 38. Active-site charge relay system residues include threonine 40 and histidine 43. 6 residues coordinate Zn(2+): histidine 63, glutamate 64, cysteine 93, cysteine 96, cysteine 99, and cysteine 107. NAD(+)-binding positions include isoleucine 175, aspartate 195, arginine 200, 261-263 (LGI), and 285-286 (IY).

This sequence belongs to the zinc-containing alcohol dehydrogenase family. In terms of assembly, homotetramer. Zn(2+) serves as cofactor.

The protein localises to the cytoplasm. It catalyses the reaction L-threonine + NAD(+) = (2S)-2-amino-3-oxobutanoate + NADH + H(+). Its pathway is amino-acid degradation; L-threonine degradation via oxydo-reductase pathway; glycine from L-threonine: step 1/2. Catalyzes the NAD(+)-dependent oxidation of L-threonine to 2-amino-3-ketobutyrate. This chain is L-threonine 3-dehydrogenase, found in Xanthomonas euvesicatoria pv. vesicatoria (strain 85-10) (Xanthomonas campestris pv. vesicatoria).